Here is a 232-residue protein sequence, read N- to C-terminus: UPF0173 metal-dependent hydrolase Msil_0741 (232 aa).

It belongs to the UPF0173 family.

In Methylocella silvestris (strain DSM 15510 / CIP 108128 / LMG 27833 / NCIMB 13906 / BL2), this protein is UPF0173 metal-dependent hydrolase Msil_0741.